The primary structure comprises 144 residues: D-aminoacyl-tRNA deacylase (144 aa).

The Gly-cisPro motif, important for rejection of L-amino acids signature appears at 136-137 (GP).

Belongs to the DTD family. Homodimer.

The protein resides in the cytoplasm. The catalysed reaction is glycyl-tRNA(Ala) + H2O = tRNA(Ala) + glycine + H(+). The enzyme catalyses a D-aminoacyl-tRNA + H2O = a tRNA + a D-alpha-amino acid + H(+). Functionally, an aminoacyl-tRNA editing enzyme that deacylates mischarged D-aminoacyl-tRNAs. Also deacylates mischarged glycyl-tRNA(Ala), protecting cells against glycine mischarging by AlaRS. Acts via tRNA-based rather than protein-based catalysis; rejects L-amino acids rather than detecting D-amino acids in the active site. By recycling D-aminoacyl-tRNA to D-amino acids and free tRNA molecules, this enzyme counteracts the toxicity associated with the formation of D-aminoacyl-tRNA entities in vivo and helps enforce protein L-homochirality. This Haemophilus influenzae (strain PittGG) protein is D-aminoacyl-tRNA deacylase.